We begin with the raw amino-acid sequence, 139 residues long: Putative pre-16S rRNA nuclease (139 aa).

This sequence belongs to the YqgF nuclease family.

Its subcellular location is the cytoplasm. In terms of biological role, could be a nuclease involved in processing of the 5'-end of pre-16S rRNA. This is Putative pre-16S rRNA nuclease from Streptococcus equi subsp. equi (strain 4047).